The primary structure comprises 339 residues: DNA-directed RNA polymerase subunit alpha (339 aa).

An alpha N-terminal domain (alpha-NTD) region spans residues M1–D235. The interval F251–F339 is alpha C-terminal domain (alpha-CTD).

It belongs to the RNA polymerase alpha chain family. Homodimer. The RNAP catalytic core consists of 2 alpha, 1 beta, 1 beta' and 1 omega subunit. When a sigma factor is associated with the core the holoenzyme is formed, which can initiate transcription.

It carries out the reaction RNA(n) + a ribonucleoside 5'-triphosphate = RNA(n+1) + diphosphate. DNA-dependent RNA polymerase catalyzes the transcription of DNA into RNA using the four ribonucleoside triphosphates as substrates. This is DNA-directed RNA polymerase subunit alpha from Gluconobacter oxydans (strain 621H) (Gluconobacter suboxydans).